A 306-amino-acid polypeptide reads, in one-letter code: Pantothenate kinase (306 aa).

Position 91–98 (91–98 (GSVAVGKS)) interacts with ATP.

It belongs to the prokaryotic pantothenate kinase family.

It is found in the cytoplasm. The catalysed reaction is (R)-pantothenate + ATP = (R)-4'-phosphopantothenate + ADP + H(+). It functions in the pathway cofactor biosynthesis; coenzyme A biosynthesis; CoA from (R)-pantothenate: step 1/5. The chain is Pantothenate kinase from Streptococcus mutans serotype c (strain ATCC 700610 / UA159).